The following is a 271-amino-acid chain: Regulatory protein RecX (271 aa).

Belongs to the RecX family.

It localises to the cytoplasm. Modulates RecA activity. In Lactobacillus johnsonii (strain CNCM I-12250 / La1 / NCC 533), this protein is Regulatory protein RecX.